The primary structure comprises 1232 residues: Dynactin subunit 1 (1232 aa).

A CAP-Gly domain is found at 31 to 73; the sequence is GATLFATGKWVGVILDDSKGKNDGTVQGRRYFTCEENHGIFVR. 2 disordered regions span residues 82–183 and 339–358; these read DGAD…AQVK and SASEKQEHIKVQKQMEKKNT. Positions 86-95 are enriched in low complexity; that stretch reads TTSPETPEPT. The span at 108-117 shows a compositional bias: polar residues; it reads PKSSKLPTRP. Residues 118-130 are compositionally biased toward low complexity; it reads SSSAASSGTASAS. Over residues 133–144 the composition is skewed to polar residues; it reads EISSSEPSTPAQ. Positions 146–163 are enriched in low complexity; the sequence is PLAAPIIPSPSSAITSPV. Coiled-coil stretches lie at residues 170–505, 908–1005, 1046–1071, and 1136–1166; these read GPSK…KEQQ, ETVI…RTIE, LLLQQIDALRLSMKHLKHENNKLKAH, and AAQLLEQTARLKSLSDTIDKLKNEVMKETVS. Basic and acidic residues predominate over residues 172–183; it reads SKEEENLRAQVK.

This sequence belongs to the dynactin 150 kDa subunit family. In terms of assembly, monomer and homodimer. Subunit of dynactin, a multiprotein complex part of a tripartite complex with dynein and a adapter, such as BICDL1, BICD2 or HOOK3. The dynactin complex is built around ACTR1A/ACTB filament and consists of an actin-related filament composed of a shoulder domain, a pointed end and a barbed end. Its length is defined by its flexible shoulder domain. The soulder is composed of 2 DCTN1 subunits, 4 DCTN2 and 2 DCTN3. DCTN1/p150(glued) binds directly to microtubules and to cytoplasmic dynein.

It is found in the cytoplasm. The protein localises to the cytoskeleton. It localises to the microtubule organizing center. Its subcellular location is the centrosome. The protein resides in the centriole. It is found in the spindle. The protein localises to the cell cortex. In terms of biological role, part of the dynactin complex that activates the molecular motor dynein for ultra-processive transport along microtubules. Plays a key role in dynein-mediated retrograde transport of vesicles and organelles along microtubules by recruiting and tethering dynein to microtubules. Binds to both dynein and microtubules providing a link between specific cargos, microtubules and dynein. Essential for targeting dynein to microtubule plus ends, recruiting dynein to membranous cargos and enhancing dynein processivity (the ability to move along a microtubule for a long distance without falling off the track). Can also act as a brake to slow the dynein motor during motility along the microtubule. Can regulate microtubule stability by promoting microtubule formation, nucleation and polymerization and by inhibiting microtubule catastrophe in neurons. Inhibits microtubule catastrophe by binding both to microtubules and to tubulin, leading to enhanced microtubule stability along the axon. Plays a role in metaphase spindle orientation. Plays a role in centriole cohesion and subdistal appendage organization and function. Its recruitment to the centriole in a KIF3A-dependent manner is essential for the maintenance of centriole cohesion and the formation of subdistal appendage. Also required for microtubule anchoring at the mother centriole. Plays a role in primary cilia formation. The polypeptide is Dynactin subunit 1 (dctn1) (Xenopus laevis (African clawed frog)).